Consider the following 194-residue polypeptide: Ion-translocating oxidoreductase complex subunit B (194 aa).

The segment at 1–26 (MSSILIAVIAIAALALVFGLILGFAS) is hydrophobic. In terms of domain architecture, 4Fe-4S spans 32 to 90 (ESDPIVEQIDAILPQTQCGQCGYPGCKPYAEAIANGDMINKCPPGGQATIEKLADLMGV). [4Fe-4S] cluster contacts are provided by C49, C52, C57, C73, C114, C117, C120, C124, C144, C147, C150, and C154. 4Fe-4S ferredoxin-type domains follow at residues 105-134 (KVAFIHEDMCIGCTKCIQACPVDAIVGGTK) and 135-164 (ALHTVIESECTGCDLCVAPCPTDCIEMIPV).

The protein belongs to the 4Fe4S bacterial-type ferredoxin family. RnfB subfamily. The complex is composed of six subunits: RnfA, RnfB, RnfC, RnfD, RnfE and RnfG. [4Fe-4S] cluster serves as cofactor.

It is found in the cell inner membrane. Functionally, part of a membrane-bound complex that couples electron transfer with translocation of ions across the membrane. The protein is Ion-translocating oxidoreductase complex subunit B of Aliivibrio fischeri (strain ATCC 700601 / ES114) (Vibrio fischeri).